The sequence spans 314 residues: Ferrochelatase (314 aa).

Residues H184 and E259 each contribute to the Fe cation site.

This sequence belongs to the ferrochelatase family.

It is found in the cytoplasm. The catalysed reaction is heme b + 2 H(+) = protoporphyrin IX + Fe(2+). Its pathway is porphyrin-containing compound metabolism; protoheme biosynthesis; protoheme from protoporphyrin-IX: step 1/1. Its function is as follows. Catalyzes the ferrous insertion into protoporphyrin IX. The protein is Ferrochelatase of Chlamydia trachomatis serovar A (strain ATCC VR-571B / DSM 19440 / HAR-13).